The chain runs to 310 residues: Homoserine kinase (310 aa).

Residue 91–101 coordinates ATP; sequence PIGSGLGSSAC.

It belongs to the GHMP kinase family. Homoserine kinase subfamily.

It localises to the cytoplasm. It carries out the reaction L-homoserine + ATP = O-phospho-L-homoserine + ADP + H(+). It functions in the pathway amino-acid biosynthesis; L-threonine biosynthesis; L-threonine from L-aspartate: step 4/5. Its function is as follows. Catalyzes the ATP-dependent phosphorylation of L-homoserine to L-homoserine phosphate. The polypeptide is Homoserine kinase (Escherichia coli O6:H1 (strain CFT073 / ATCC 700928 / UPEC)).